A 327-amino-acid chain; its full sequence is Arabinose 5-phosphate isomerase KpsF (327 aa).

One can recognise an SIS domain in the interval 48–191; that stretch reads VLNLIMNCKG…AIAMIHQRKF (144 aa). 63 to 68 is a binding site for ATP; the sequence is GMGKSG. Residues 82-83, His89, His95, 121-130, and 155-157 each bind substrate; these read GT, KLVPSLKNFG, and HMA. His89 is a Zn(2+) binding site. CBS domains follow at residues 217-273 and 282-327; these read MQHD…EGSL and MTRE…RIFD.

Homotetramer.

It catalyses the reaction D-arabinose 5-phosphate = D-ribulose 5-phosphate. With respect to regulation, inhibited by 10 uM zinc, cadmium or mercury ions. In terms of biological role, involved in the biosynthesis of K-antigen capsules. Catalyzes the reversible aldol-ketol isomerization between D-ribulose 5-phosphate (Ru5P) and D-arabinose 5-phosphate (A5P). In Escherichia coli O6:H1 (strain CFT073 / ATCC 700928 / UPEC), this protein is Arabinose 5-phosphate isomerase KpsF.